The primary structure comprises 394 residues: Xylose isomerase (394 aa).

Active-site residues include H54 and D57. Residues E181, E217, H220, D245, D255, D257, and D292 each coordinate Mg(2+).

It belongs to the xylose isomerase family. In terms of assembly, homotetramer. Mg(2+) serves as cofactor.

It is found in the cytoplasm. The catalysed reaction is alpha-D-xylose = alpha-D-xylulofuranose. This chain is Xylose isomerase (xylA), found in Actinoplanes sp. (strain ATCC 31351 / 3876) (Ampullariella sp.).